The primary structure comprises 460 residues: Cysteine--tRNA ligase (460 aa).

Cys-28 contacts Zn(2+). Residues 30–40 (MTVYDYCHLGH) carry the 'HIGH' region motif. Zn(2+) is bound by residues Cys-209, His-234, and Glu-238. The 'KMSKS' region signature appears at 266 to 270 (KMSKS). Lys-269 contacts ATP.

This sequence belongs to the class-I aminoacyl-tRNA synthetase family. Monomer. Zn(2+) is required as a cofactor.

It localises to the cytoplasm. It carries out the reaction tRNA(Cys) + L-cysteine + ATP = L-cysteinyl-tRNA(Cys) + AMP + diphosphate. The sequence is that of Cysteine--tRNA ligase from Thioalkalivibrio sulfidiphilus (strain HL-EbGR7).